The sequence spans 147 residues: MRCPFCGHEDTQVAETRESDEGDVIRRRRRCPSCDKRFTTYERAELAMPAIVKKDGSRSEFDRSKIRASMMLALRKRPVSIDQVEAALGRIEEKMLATAANEVPSAKIGEMVMRELKKLDKVAYVRFASVYRSFEGVDEFSRLIKDI.

Residues 3–34 (CPFCGHEDTQVAETRESDEGDVIRRRRRCPSC) fold into a zinc finger. The ATP-cone domain maps to 49-139 (PAIVKKDGSR…VYRSFEGVDE (91 aa)).

The protein belongs to the NrdR family. Requires Zn(2+) as cofactor.

In terms of biological role, negatively regulates transcription of bacterial ribonucleotide reductase nrd genes and operons by binding to NrdR-boxes. This Methylibium petroleiphilum (strain ATCC BAA-1232 / LMG 22953 / PM1) protein is Transcriptional repressor NrdR.